The following is an 839-amino-acid chain: Probable beta-glucosidase I (839 aa).

A glycan (N-linked (GlcNAc...) asparagine) is linked at Asn197. The active site involves Asp225. Residues 395-555 (DGKTGFSFKV…GQEELISNAV (161 aa)) enclose the PA14 domain. A glycan (N-linked (GlcNAc...) asparagine) is linked at Asn620.

Belongs to the glycosyl hydrolase 3 family.

Its subcellular location is the secreted. The catalysed reaction is Hydrolysis of terminal, non-reducing beta-D-glucosyl residues with release of beta-D-glucose.. It participates in glycan metabolism; cellulose degradation. Functionally, beta-glucosidases are one of a number of cellulolytic enzymes involved in the degradation of cellulosic biomass. Catalyzes the last step releasing glucose from the inhibitory cellobiose. In Aspergillus flavus (strain ATCC 200026 / FGSC A1120 / IAM 13836 / NRRL 3357 / JCM 12722 / SRRC 167), this protein is Probable beta-glucosidase I (bglI).